A 153-amino-acid polypeptide reads, in one-letter code: NAD(P)H-quinone oxidoreductase subunit N (153 aa).

It belongs to the complex I NdhN subunit family. In terms of assembly, NDH-1 can be composed of about 15 different subunits; different subcomplexes with different compositions have been identified which probably have different functions.

Its subcellular location is the cellular thylakoid membrane. The enzyme catalyses a plastoquinone + NADH + (n+1) H(+)(in) = a plastoquinol + NAD(+) + n H(+)(out). It catalyses the reaction a plastoquinone + NADPH + (n+1) H(+)(in) = a plastoquinol + NADP(+) + n H(+)(out). Its function is as follows. NDH-1 shuttles electrons from an unknown electron donor, via FMN and iron-sulfur (Fe-S) centers, to quinones in the respiratory and/or the photosynthetic chain. The immediate electron acceptor for the enzyme in this species is believed to be plastoquinone. Couples the redox reaction to proton translocation, and thus conserves the redox energy in a proton gradient. Cyanobacterial NDH-1 also plays a role in inorganic carbon-concentration. This is NAD(P)H-quinone oxidoreductase subunit N from Synechococcus sp. (strain CC9311).